A 387-amino-acid chain; its full sequence is Succinate--CoA ligase [ADP-forming] subunit beta (387 aa).

Residues 9-243 enclose the ATP-grasp domain; that stretch reads KEILSTYGIP…YSQLDPLEIT (235 aa). Residues lysine 45, 52 to 54, glutamate 98, valine 101, and glutamate 106 contribute to the ATP site; that span reads GRG. Positions 198 and 212 each coordinate Mg(2+). Residues asparagine 263 and 320 to 322 each bind substrate; that span reads GIM.

The protein belongs to the succinate/malate CoA ligase beta subunit family. Heterotetramer of two alpha and two beta subunits. Mg(2+) is required as a cofactor.

It carries out the reaction succinate + ATP + CoA = succinyl-CoA + ADP + phosphate. The enzyme catalyses GTP + succinate + CoA = succinyl-CoA + GDP + phosphate. The protein operates within carbohydrate metabolism; tricarboxylic acid cycle; succinate from succinyl-CoA (ligase route): step 1/1. Functionally, succinyl-CoA synthetase functions in the citric acid cycle (TCA), coupling the hydrolysis of succinyl-CoA to the synthesis of either ATP or GTP and thus represents the only step of substrate-level phosphorylation in the TCA. The beta subunit provides nucleotide specificity of the enzyme and binds the substrate succinate, while the binding sites for coenzyme A and phosphate are found in the alpha subunit. The chain is Succinate--CoA ligase [ADP-forming] subunit beta from Trichlorobacter lovleyi (strain ATCC BAA-1151 / DSM 17278 / SZ) (Geobacter lovleyi).